The following is a 267-amino-acid chain: 3-methyl-2-oxobutanoate hydroxymethyltransferase (267 aa).

Mg(2+) is bound by residues Asp-45 and Asp-84. 3-methyl-2-oxobutanoate is bound by residues 45-46 (DS), Asp-84, and Lys-113. Glu-115 lines the Mg(2+) pocket. Glu-182 acts as the Proton acceptor in catalysis.

It belongs to the PanB family. Homodecamer; pentamer of dimers. Mg(2+) serves as cofactor.

Its subcellular location is the cytoplasm. The enzyme catalyses 3-methyl-2-oxobutanoate + (6R)-5,10-methylene-5,6,7,8-tetrahydrofolate + H2O = 2-dehydropantoate + (6S)-5,6,7,8-tetrahydrofolate. Its pathway is cofactor biosynthesis; coenzyme A biosynthesis. Functionally, catalyzes the reversible reaction in which hydroxymethyl group from 5,10-methylenetetrahydrofolate is transferred onto alpha-ketoisovalerate to form ketopantoate. The chain is 3-methyl-2-oxobutanoate hydroxymethyltransferase from Saccharolobus solfataricus (strain ATCC 35092 / DSM 1617 / JCM 11322 / P2) (Sulfolobus solfataricus).